The primary structure comprises 505 residues: Maturase K (505 aa).

Belongs to the intron maturase 2 family. MatK subfamily.

The protein localises to the plastid. Its subcellular location is the chloroplast. Its function is as follows. Usually encoded in the trnK tRNA gene intron. Probably assists in splicing its own and other chloroplast group II introns. The protein is Maturase K of Rhizophora stylosa (Bakau).